We begin with the raw amino-acid sequence, 457 residues long: Siroheme synthase (457 aa).

The segment at 1-204 is precorrin-2 dehydrogenase /sirohydrochlorin ferrochelatase; that stretch reads MDHLPIFCQL…NDQKAITETT (204 aa). NAD(+)-binding positions include 22–23 and 43–44; these read DV and LA. Ser128 is modified (phosphoserine). A uroporphyrinogen-III C-methyltransferase region spans residues 216-457; that stretch reads GEVVLVGAGP…RDKLNWFSNH (242 aa). Pro225 provides a ligand contact to S-adenosyl-L-methionine. The Proton acceptor role is filled by Asp248. The Proton donor role is filled by Lys270. S-adenosyl-L-methionine contacts are provided by residues 301–303, Ile306, 331–332, Met382, and Gly411; these read GGD and TA.

In the N-terminal section; belongs to the precorrin-2 dehydrogenase / sirohydrochlorin ferrochelatase family. The protein in the C-terminal section; belongs to the precorrin methyltransferase family.

It catalyses the reaction uroporphyrinogen III + 2 S-adenosyl-L-methionine = precorrin-2 + 2 S-adenosyl-L-homocysteine + H(+). The catalysed reaction is precorrin-2 + NAD(+) = sirohydrochlorin + NADH + 2 H(+). The enzyme catalyses siroheme + 2 H(+) = sirohydrochlorin + Fe(2+). It participates in cofactor biosynthesis; adenosylcobalamin biosynthesis; precorrin-2 from uroporphyrinogen III: step 1/1. It functions in the pathway cofactor biosynthesis; adenosylcobalamin biosynthesis; sirohydrochlorin from precorrin-2: step 1/1. The protein operates within porphyrin-containing compound metabolism; siroheme biosynthesis; precorrin-2 from uroporphyrinogen III: step 1/1. Its pathway is porphyrin-containing compound metabolism; siroheme biosynthesis; siroheme from sirohydrochlorin: step 1/1. It participates in porphyrin-containing compound metabolism; siroheme biosynthesis; sirohydrochlorin from precorrin-2: step 1/1. In terms of biological role, multifunctional enzyme that catalyzes the SAM-dependent methylations of uroporphyrinogen III at position C-2 and C-7 to form precorrin-2 via precorrin-1. Then it catalyzes the NAD-dependent ring dehydrogenation of precorrin-2 to yield sirohydrochlorin. Finally, it catalyzes the ferrochelation of sirohydrochlorin to yield siroheme. This chain is Siroheme synthase, found in Escherichia coli O6:H1 (strain CFT073 / ATCC 700928 / UPEC).